Consider the following 400-residue polypeptide: MQMKTLGVSELNNYIKNVIDNDFILKNSKIKGEISNFKIHISGHIYFSLKDKNSKINCIMFRSYARGLKFIPENGDNVILKGRVSVYQKDGAYQFYCEDIEKEGVGDLFIAFEALKKKLYNEGLFDEYNKKEIPRFAKKIGVITSPTGAAVKDIINVSKRRNKGVELLIYPALVQGENAPKDLINGINYFSNRDDIDTIIIARGGGSIEELWAFNNEDLAYAIYNCNKPVISGVGHETDFTICDFVSDRRAPTPSAAAEIGVFNLNEVNTNIENYKNRLYNLIRNTINLKFKELNSLENAIKINSPMNTIANEYIRIDNLKNKLCHKIESKIEYEKIKLSKANSLLNAHNPLNILSRGFSIIKDEKNNVITTKEKIEENTCINITLKDGSTKVRISDVYK.

Belongs to the XseA family. Heterooligomer composed of large and small subunits.

It localises to the cytoplasm. It carries out the reaction Exonucleolytic cleavage in either 5'- to 3'- or 3'- to 5'-direction to yield nucleoside 5'-phosphates.. In terms of biological role, bidirectionally degrades single-stranded DNA into large acid-insoluble oligonucleotides, which are then degraded further into small acid-soluble oligonucleotides. This is Exodeoxyribonuclease 7 large subunit from Clostridium novyi (strain NT).